Reading from the N-terminus, the 261-residue chain is MKYYGKCISYISILILTFFIGGCGFMNKENNKEAEIKESFHKTLSMYPIKNLEDLYDKEGYRDEEFEKRDKGTWIINSVMNIQKKGQAMESRGMVLYMNRNTRKTTGHFYTSITTEDKKGRVYNKEKNTLFNLKNNKIEPTKPIVDETLKNEIKNFQFFSQYGNFKNLKDYKNGNVSYNPNVPSYSAEYQLSNEDDNVKQLRKKYDIPTKKAPKLILKGDGDLKGSSIGHKHVELSFVRNKEESIYFSDSVEFNPSEVNNE.

An N-terminal signal peptide occupies residues 1-22 (MKYYGKCISYISILILTFFIGG). A lipid anchor (N-palmitoyl cysteine) is attached at Cys-23. Cys-23 is lipidated: S-diacylglycerol cysteine.

It belongs to the staphylococcal tandem lipoprotein family.

It is found in the cell membrane. This is an uncharacterized protein from Staphylococcus epidermidis (strain ATCC 12228 / FDA PCI 1200).